Consider the following 469-residue polypeptide: Probable Xaa-Pro aminopeptidase AN0832 (469 aa).

Positions 260, 271, 398, and 437 each coordinate Mn(2+).

This sequence belongs to the peptidase M24B family. Mn(2+) is required as a cofactor.

The enzyme catalyses Release of any N-terminal amino acid, including proline, that is linked to proline, even from a dipeptide or tripeptide.. Functionally, catalyzes the removal of a penultimate prolyl residue from the N-termini of peptides. The chain is Probable Xaa-Pro aminopeptidase AN0832 from Emericella nidulans (strain FGSC A4 / ATCC 38163 / CBS 112.46 / NRRL 194 / M139) (Aspergillus nidulans).